The chain runs to 195 residues: ATP-dependent Clp protease proteolytic subunit (195 aa).

S98 acts as the Nucleophile in catalysis. The active site involves H123.

Belongs to the peptidase S14 family. In terms of assembly, fourteen ClpP subunits assemble into 2 heptameric rings which stack back to back to give a disk-like structure with a central cavity, resembling the structure of eukaryotic proteasomes.

It localises to the cytoplasm. It carries out the reaction Hydrolysis of proteins to small peptides in the presence of ATP and magnesium. alpha-casein is the usual test substrate. In the absence of ATP, only oligopeptides shorter than five residues are hydrolyzed (such as succinyl-Leu-Tyr-|-NHMec, and Leu-Tyr-Leu-|-Tyr-Trp, in which cleavage of the -Tyr-|-Leu- and -Tyr-|-Trp bonds also occurs).. In terms of biological role, cleaves peptides in various proteins in a process that requires ATP hydrolysis. Has a chymotrypsin-like activity. Plays a major role in the degradation of misfolded proteins. This is ATP-dependent Clp protease proteolytic subunit from Helicobacter pylori (strain G27).